The primary structure comprises 416 residues: Alpha-1-antiproteinase (416 aa).

Residues 1-24 form the signal peptide; sequence MALSITRGLLLLAALCCLAPISLA. 4 N-linked (GlcNAc...) asparagine glycosylation sites follow: Asn68, Asn105, Asn143, and Asn269. The tract at residues 371 to 390 is RCL; the sequence is GSTFLEAIPMSLPPDVEFNR. Position 381 is a phosphoserine (Ser381).

The protein belongs to the serpin family. As to quaternary structure, interacts with CELA2A. Interacts with ERGIC3 and LMAN1/ERGIC53. Interacts with PRSS1/Trypsin. As to expression, plasma.

It is found in the secreted. In terms of biological role, inhibitor of serine proteases. Its primary target is elastase, but it also has a moderate affinity for plasmin and thrombin. Inhibits trypsin, chymotrypsin and plasminogen activator. The polypeptide is Alpha-1-antiproteinase (SERPINA1) (Bos taurus (Bovine)).